Reading from the N-terminus, the 311-residue chain is NEDD4 family-interacting protein 2 (311 aa).

Positions 1–133 (RRSASDAELS…PPYSSITVEA (133 aa)) are disordered. Topologically, residues 1 to 206 (RRSASDAELS…VEQLRVGNDG (206 aa)) are cytoplasmic. Residues 7–22 (AELSAGAEGATGSEAA) are compositionally biased toward low complexity. Over residues 26–37 (DLGGRTRGGGRG) the composition is skewed to gly residues. Over residues 38–47 (SAAAAATTST) the composition is skewed to low complexity. Residues 48–75 (REAEGAERRGDTPARKPDPEAGRMDHHQ) show a composition bias toward basic and acidic residues. A compositionally biased stretch (polar residues) spans 92 to 101 (ESSAVEQPST). Residues 102–120 (SSLAAPTVEAAASAPALDP) are compositionally biased toward low complexity. The interaction with NEDD4 stretch occupies residues 123–126 (PPPY). The PPxY motif 1 signature appears at 123-126 (PPPY). A phosphotyrosine; by SRC mark is found at tyrosine 126, tyrosine 142, tyrosine 146, and tyrosine 152. Short sequence motifs (PPxY motif) lie at residues 149–152 (PPPY) and 159–161 (PTY). The chain crosses the membrane as a helical span at residues 207-227 (IFMLAFFMAFIFNWLGFCLSF). Residues 228 to 232 (CITNT) are Extracellular-facing. The helical transmembrane segment at 233–253 (IAGRYGAICGFGLSLIKWILI) threads the bilayer. The Cytoplasmic segment spans residues 254-262 (VRFSDYFTG). The helical transmembrane segment at 263–283 (YFNGQYWLWWIFLVLGLLLFF) threads the bilayer. Topologically, residues 284–311 (RGFVNYLKVRNMSESMAAAHRTRYFFLL) are extracellular.

As to quaternary structure, forms heterodimers with NDFIP1. Interacts with HECT domain-containing E3 ubiquitin-protein ligases, including NEDD4. Interacts with NEDD4L. When phosphorylated at Tyr-142, interacts with SRC and LYN SH2 domain. May thus act as a scaffold that recruits SRC to NDFIP1, enhancing NDFIP1 phosphorylation. Interacts with SLC11A2/DMT1. May interact with phosphorylated EGFR. Interacts with KCNH2. Post-translationally, ubiquitinated by NEDD4 and NEDD4L; which does not affect turnover. Also ubiquitinated by ITCH. In terms of processing, undergoes transient tyrosine-phosphorylation following EGF stimulation, most probably catalyzed by SRC. Phosphorylation on Tyr-126, Tyr-146 and Tyr-152 are dependent on the phosphorylation on Tyr-142. Also phosphorylated by LYN and FYN. Ubiquitously expressed, with highest levels in brain, liver, kidney and testis.

It localises to the endosome membrane. Its subcellular location is the golgi apparatus membrane. It is found in the endosome. The protein localises to the multivesicular body membrane. Its function is as follows. Activates HECT domain-containing E3 ubiquitin-protein ligases, including ITCH, NEDD4, NEDD4L, SMURF2, WWP1 and WWP2, and consequently modulates the stability of their targets. As a result, may control many cellular processes. Recruits ITCH, NEDD4 and SMURF2 to endosomal membranes. Negatively regulates KCNH2 potassium channel activity by decreasing its cell-surface expression and interfering with channel maturation through recruitment of NEDD4L to the Golgi apparatus and multivesicular body where it mediates KCNH2 degradation. May modulate EGFR signaling. Together with NDFIP1, limits the cytokine signaling and expansion of effector Th2 T-cells by promoting degradation of JAK1, probably by ITCH- and NEDD4L-mediated ubiquitination. This Mus musculus (Mouse) protein is NEDD4 family-interacting protein 2 (Ndfip2).